Here is a 545-residue protein sequence, read N- to C-terminus: Glucose-6-phosphate isomerase (545 aa).

Glu351 (proton donor) is an active-site residue. Active-site residues include His382 and Lys510.

The protein belongs to the GPI family.

It localises to the cytoplasm. The enzyme catalyses alpha-D-glucose 6-phosphate = beta-D-fructose 6-phosphate. The protein operates within carbohydrate biosynthesis; gluconeogenesis. It participates in carbohydrate degradation; glycolysis; D-glyceraldehyde 3-phosphate and glycerone phosphate from D-glucose: step 2/4. Its function is as follows. Catalyzes the reversible isomerization of glucose-6-phosphate to fructose-6-phosphate. The chain is Glucose-6-phosphate isomerase from Shewanella baltica (strain OS155 / ATCC BAA-1091).